A 195-amino-acid polypeptide reads, in one-letter code: Imidazoleglycerol-phosphate dehydratase (195 aa).

This sequence belongs to the imidazoleglycerol-phosphate dehydratase family.

Its subcellular location is the cytoplasm. The catalysed reaction is D-erythro-1-(imidazol-4-yl)glycerol 3-phosphate = 3-(imidazol-4-yl)-2-oxopropyl phosphate + H2O. It participates in amino-acid biosynthesis; L-histidine biosynthesis; L-histidine from 5-phospho-alpha-D-ribose 1-diphosphate: step 6/9. The sequence is that of Imidazoleglycerol-phosphate dehydratase from Geobacter sp. (strain M21).